Here is a 523-residue protein sequence, read N- to C-terminus: Putative oxidoreductase TDA3 (523 aa).

The segment covering 157–172 (NSSLSSSGSSLKNDSA) has biased composition (low complexity). The tract at residues 157–189 (NSSLSSSGSSLKNDSASNEEEGSDIHVSSSVPS) is disordered. 3 positions are modified to phosphoserine: serine 189, serine 204, and serine 306.

The protein belongs to the TDA3 family. In terms of assembly, interacts with BTN2.

It is found in the cytoplasm. The protein resides in the late endosome. In terms of biological role, putative oxidoreductase that negatively regulates the retrieval of cargo from late endosomes to the Golgi. Regulates YIF1 and KEX2 localization. Required for fast DNA replication. The sequence is that of Putative oxidoreductase TDA3 (TDA3) from Saccharomyces cerevisiae (strain ATCC 204508 / S288c) (Baker's yeast).